A 343-amino-acid chain; its full sequence is MTDTLTITRPDDWHLHVRDGAALEAVVPHSARQFGRALVMPNLRPPVTTAAQAVAYRDRIRAAVPPGTAFEPVMSLYLTDKLPPEEIALAAEAGVRALKLYPAGATTNSDAGVTDIRHTYKTLEAMQKHGLLLLVHGEVTDPAVDLFDREAVFIDRVMIPLRRDFPELKVVFEHLTTQEGAHYVRDANRFTAATITAHHLLYNRNAIFTGGIRPHYYCLPVLKRETHRVALVQAATSGSDRFFLGTDSAPHPAHLKEHALGCAGCYTALTAIELYAEAFDSVDALDKLEGFASFHGPDFYGLPRNSGTITLKRESWTVPETVPYGDATLKPLRGGETVHWKLM.

2 residues coordinate Zn(2+): His14 and His16. Substrate is bound by residues 16–18 and Asn42; that span reads HVR. Zn(2+)-binding residues include Lys99, His136, and His174. Lys99 bears the N6-carboxylysine mark. Position 136 (His136) interacts with substrate. Residue Leu219 participates in substrate binding. Residue Asp247 coordinates Zn(2+). Asp247 is an active-site residue. Residues His251 and Ala263 each contribute to the substrate site.

It belongs to the metallo-dependent hydrolases superfamily. DHOase family. Class II DHOase subfamily. Homodimer. It depends on Zn(2+) as a cofactor.

The catalysed reaction is (S)-dihydroorotate + H2O = N-carbamoyl-L-aspartate + H(+). Its pathway is pyrimidine metabolism; UMP biosynthesis via de novo pathway; (S)-dihydroorotate from bicarbonate: step 3/3. Its function is as follows. Catalyzes the reversible cyclization of carbamoyl aspartate to dihydroorotate. This Variovorax paradoxus (strain S110) protein is Dihydroorotase.